A 495-amino-acid chain; its full sequence is Ribose import ATP-binding protein RbsA (495 aa).

2 consecutive ABC transporter domains span residues 7–242 (LEMR…VGRP) and 250–491 (ERDI…TGVN). 39–46 (GENGAGKS) is a binding site for ATP.

It belongs to the ABC transporter superfamily. Ribose importer (TC 3.A.1.2.1) family. As to quaternary structure, the complex is composed of an ATP-binding protein (RbsA), two transmembrane proteins (RbsC) and a solute-binding protein (RbsB).

The protein localises to the cell inner membrane. The catalysed reaction is D-ribose(out) + ATP + H2O = D-ribose(in) + ADP + phosphate + H(+). Functionally, part of the ABC transporter complex RbsABC involved in ribose import. Responsible for energy coupling to the transport system. The protein is Ribose import ATP-binding protein RbsA of Shigella dysenteriae serotype 1 (strain Sd197).